Reading from the N-terminus, the 257-residue chain is tRNA (guanine-N(1)-)-methyltransferase (257 aa).

S-adenosyl-L-methionine-binding positions include Gly-117 and 137 to 142 (LGDFVL).

The protein belongs to the RNA methyltransferase TrmD family. In terms of assembly, homodimer.

The protein resides in the cytoplasm. It carries out the reaction guanosine(37) in tRNA + S-adenosyl-L-methionine = N(1)-methylguanosine(37) in tRNA + S-adenosyl-L-homocysteine + H(+). Specifically methylates guanosine-37 in various tRNAs. This Bordetella pertussis (strain Tohama I / ATCC BAA-589 / NCTC 13251) protein is tRNA (guanine-N(1)-)-methyltransferase.